The primary structure comprises 131 residues: Large ribosomal subunit protein bL21 (131 aa).

The segment at 111–131 is disordered; that stretch reads VAAATGTADARRAAHNASAKE.

This sequence belongs to the bacterial ribosomal protein bL21 family. As to quaternary structure, part of the 50S ribosomal subunit. Contacts protein L20.

This protein binds to 23S rRNA in the presence of protein L20. The polypeptide is Large ribosomal subunit protein bL21 (Cereibacter sphaeroides (strain ATCC 17029 / ATH 2.4.9) (Rhodobacter sphaeroides)).